The chain runs to 1384 residues: RRP12-like protein (1384 aa).

A compositionally biased stretch (basic residues) spans 1–13; the sequence is MGKFRSKLKRNGK. The interval 1 to 32 is disordered; that stretch reads MGKFRSKLKRNGKGKTWSRGESATSNPTQMKH. Residues 19–29 are compositionally biased toward polar residues; sequence RGESATSNPTQ. Phosphoserine is present on residues S82, S85, S96, S1094, S1095, S1117, and S1119. Disordered regions lie at residues 1082 to 1102, 1114 to 1155, and 1176 to 1384; these read LRKKQNLEAQEDSSDDELVSG, LADS…IRED, and SAQT…KKYK. Composition is skewed to acidic residues over residues 1090-1099 and 1114-1127; these read AQEDSSDDEL and LADSDSDLPEDMDA. Positions 1176–1191 are enriched in polar residues; that stretch reads SAQTATPAQSQKTKAQ. S1221, S1225, S1227, S1230, S1250, and S1251 each carry phosphoserine. Polar residues-rich tracts occupy residues 1276-1285 and 1297-1315; these read SGKTTASSRY and TAGNSDAMSVKSGKSTSRP. Residues 1321–1334 are compositionally biased toward basic and acidic residues; the sequence is GSKKAKGDMKKSGK. Residues 1348-1362 show a composition bias toward basic residues; the sequence is LNKRKRSMNSRKFKS. The span at 1369-1378 shows a compositional bias: gly residues; sequence AENGGAGGGR.

This sequence belongs to the RRP12 family.

It is found in the nucleus. This is RRP12-like protein from Drosophila melanogaster (Fruit fly).